A 268-amino-acid polypeptide reads, in one-letter code: Centromere protein Q (268 aa).

The disordered stretch occupies residues 1 to 31 (MSGKANASKKNFEQLKRNPKRKKDNEEVVLS). A Phosphoserine modification is found at S31. A coiled-coil region spans residues 170–203 (ELMTGNIQSLKNKIQILASEVEEEEERVKQIHQI). At S249 the chain carries Phosphoserine.

Belongs to the CENP-Q/OKP1 family. As to quaternary structure, component of the CENPA-CAD complex, composed of CENPI, CENPK, CENPL, CENPO, CENPP, CENPQ, CENPR and CENPS. The CENPA-CAD complex interacts with the CENPA-NAC complex, at least composed of CENPA, CENPC, CENPH, CENPM, CENPN, CENPT and CENPU.

The protein localises to the nucleus. Its subcellular location is the chromosome. It localises to the centromere. Its function is as follows. Component of the CENPA-CAD (nucleosome distal) complex, a complex recruited to centromeres which is involved in assembly of kinetochore proteins, mitotic progression and chromosome segregation. May be involved in incorporation of newly synthesized CENPA into centromeres via its interaction with the CENPA-NAC complex. Plays an important role in chromosome congression and in the recruitment of CENP-O complex (which comprises CENPO, CENPP, CENPQ and CENPU), CENPE and PLK1 to the kinetochores. This is Centromere protein Q (CENPQ) from Macaca fascicularis (Crab-eating macaque).